The chain runs to 413 residues: N-acylneuraminate cytidylyltransferase (413 aa).

This sequence belongs to the CMP-NeuNAc synthase family. It depends on Mg(2+) as a cofactor. Mn(2+) serves as cofactor.

Its subcellular location is the cytoplasm. It carries out the reaction an N-acylneuraminate + CTP = a CMP-N-acyl-beta-neuraminate + diphosphate. In terms of biological role, catalyzes the formation of CMP-N-acetylneuraminic acid (CMP-NeuNAc), which is essential for the formation of the capsule. This Streptococcus agalactiae serotype Ia (strain ATCC 27591 / A909 / CDC SS700) protein is N-acylneuraminate cytidylyltransferase (neuA).